The chain runs to 701 residues: DC-STAMP domain-containing protein 2 (701 aa).

Transmembrane regions (helical) follow at residues 15–35, 40–60, 82–102, and 215–235; these read TCGF…ELLG, PFGC…GMGF, LLLL…NTLQ, and FPHL…LASL. Residues asparagine 272 and asparagine 284 are each glycosylated (N-linked (GlcNAc...) asparagine). 2 consecutive transmembrane segments (helical) span residues 310-330 and 404-424; these read ALSL…IQAL and LLIM…LDLA. Asparagine 468 carries N-linked (GlcNAc...) asparagine glycosylation. The helical transmembrane segment at 488–508 threads the bilayer; it reads YIVIGTMYGLCFFVTLFGSYV. The segment at 673 to 701 is disordered; it reads LQEALGTNLSDKSTSKPERAGNRNQDRKQ. The span at 685–701 shows a compositional bias: basic and acidic residues; that stretch reads STSKPERAGNRNQDRKQ.

In terms of assembly, interacts with DCST1. As to expression, expressed in testis.

The protein localises to the cytoplasmic vesicle. It is found in the secretory vesicle. It localises to the acrosome membrane. In terms of biological role, essential sperm cell-surface protein required for sperm-egg fusion and fertilization. The chain is DC-STAMP domain-containing protein 2 from Mus musculus (Mouse).